The sequence spans 675 residues: Protein PALS1 (675 aa).

2 disordered regions span residues 1 to 34 (MTTSHMNGHVTEESDSEVKNVDLASPEEHQKHRE) and 51 to 78 (RRSAQLERIRQQQEDMRRRREEEGKKQE). Positions 1-345 (MTTSHMNGHV…QQIKPPPAKE (345 aa)) are required for the correct localization of PALS1 and PATJ at cell-cell contacts and the normal formation of tight junctions and adherens junctions. 2 stretches are compositionally biased toward basic and acidic residues: residues 10 to 34 (VTEESDSEVKNVDLASPEEHQKHRE) and 54 to 78 (AQLERIRQQQEDMRRRREEEGKKQE). Phosphoserine occurs at positions 14 and 25. Positions 21–140 (VDLASPEEHQ…LKHIQHTLVD (120 aa)) are interaction with PARD6B. Residues serine 83 and serine 84 each carry the phosphoserine modification. L27 domains are found at residues 120–177 (KILE…NKAS) and 179–235 (PFPL…MQLE). The tract at residues 181-243 (PLISNAQDLA…LEPITDERVY (63 aa)) is interaction with LIN7C. Residues 256–336 (IVRIEKARDI…TLTFVLIPSQ (81 aa)) form the PDZ domain. The region spanning 345-417 (ETVIHVKAHF…PGKSFQQQRE (73 aa)) is the SH3 domain. Residues 479–660 (KRPIILIGPQ…AYQELLRLIN (182 aa)) form the Guanylate kinase-like domain. 486–493 (GPQNCGQN) lines the ATP pocket.

It belongs to the MAGUK family. Heterodimer with MPP1. Forms a heterotrimeric complex composed of PALS1, LIN7B and PATJ; the N-terminal L27 domain of PALS1 interacts with the L27 domain of PATJ and the C-terminal L27 domain of PALS1 interacts with the L27 domain of LIN7B. Component of a complex composed of PALS1, CRB1 and MPP4. Component of a complex whose core is composed of ARHGAP17, AMOT, PALS1, PATJ and PARD3/PAR3. Component of a complex composed of PALS1, CRB1 and EPB41L5. Within the complex, interacts (via HOOK domain) with EPB41L5 (via FERM domain), and interacts with CRB1 (via intracellular domain). Component of a complex composed of PALS1, MPP3 and CRB1; PALS1 acts as a bridging protein between MPP3 (via guanylate kinase-like domain) and CRB1. Component of a complex composed of CRB3, PALS1 and PATJ. As part of the Crumbs complex; interacts with WWP1, the interaction is enhanced by AMOTL2 and facilitates WWP1 localization to the plasma membrane. The Crumbs complex promotes monoubiquitination of AMOTL2 by WWP1, which activates the Hippo signaling pathway. Interacts (via PDZ domain) with PATJ (via N-terminus). Interacts with EZR. Interacts (via PDZ domain) with CRB1 (via C-terminal ERLI motif). While the PDZ domain is sufficient for interaction with CRB1, the adjacent SH3 and guanylate kinase-like domains are likely to contribute to a high affinity interaction. Interacts with WWTR1/TAZ (via WW domain). Interacts with MPP7. Interacts (via PDZ domain) with CRB3 (via C-terminus). Interacts with LIN7C. Interacts with MPDZ. Interacts with PARD6B. Interacts with SC6A1. Interacts with CDH5; the interaction promotes PALS1 localization to cell junctions and is required for CDH5-mediated vascular lumen formation and endothelial cell. Interacts with NPHP1 (via coiled coil and SH3 domains). Interacts with NPHP4. Interacts with CRB2. In terms of assembly, (Microbial infection) Interacts (via PDZ domain) with human coronaviruses SARS-CoV and, probably, SARS-CoV-2 envelope small membrane protein E (via C-terminus); this inhibits the interaction between PALS1 and CRB3. In terms of tissue distribution, expressed at the outer limiting membrane in the retina (at protein level). Expressed in T lymphocytes (at protein level). Expressed in the kidney (at protein level).

It is found in the golgi apparatus. The protein localises to the cell membrane. It localises to the endomembrane system. Its subcellular location is the cell junction. The protein resides in the tight junction. It is found in the adherens junction. The protein localises to the cell projection. It localises to the axon. Its subcellular location is the perikaryon. The protein resides in the apical cell membrane. It is found in the endoplasmic reticulum-Golgi intermediate compartment. Functionally, plays a role in tight junction biogenesis and in the establishment of cell polarity in epithelial cells. Also involved in adherens junction biogenesis by ensuring correct localization of the exocyst complex protein EXOC4/SEC8 which allows trafficking of adherens junction structural component CDH1 to the cell surface. Plays a role through its interaction with CDH5 in vascular lumen formation and endothelial membrane polarity. Required during embryonic and postnatal retinal development. Required for the maintenance of cerebellar progenitor cells in an undifferentiated proliferative state, preventing premature differentiation, and is required for cerebellar histogenesis, fissure formation, cerebellar layer organization and cortical development. Plays a role in neuronal progenitor cell survival, potentially via promotion of mTOR signaling. Plays a role in the radial and longitudinal extension of the myelin sheath in Schwann cells. May modulate SC6A1/GAT1-mediated GABA uptake by stabilizing the transporter. Plays a role in the T-cell receptor-mediated activation of NF-kappa-B. Required for localization of EZR to the apical membrane of parietal cells and may play a role in the dynamic remodeling of the apical cytoskeleton. Required for the normal polarized localization of the vesicular marker STX4. Required for the correct trafficking of the myelin proteins PMP22 and MAG. Involved in promoting phosphorylation and cytoplasmic retention of transcriptional coactivators YAP1 and WWTR1/TAZ which leads to suppression of TGFB1-dependent transcription of target genes such as CCN2/CTGF, SERPINE1/PAI1, SNAI1/SNAIL1 and SMAD7. In terms of biological role, (Microbial infection) Acts as an interaction partner for human coronaviruses SARS-CoV and, probably, SARS-CoV-2 envelope protein E which results in delayed formation of tight junctions and disregulation of cell polarity. The chain is Protein PALS1 from Homo sapiens (Human).